The sequence spans 543 residues: Phenylalanine--tRNA ligase beta subunit (543 aa).

A B5 domain is found at 269–344; sequence FDFRIMRPAR…KSKGIENIEE (76 aa). D322, D328, E331, and D332 together coordinate Mg(2+).

It belongs to the phenylalanyl-tRNA synthetase beta subunit family. Type 2 subfamily. In terms of assembly, tetramer of two alpha and two beta subunits. Mg(2+) serves as cofactor.

It is found in the cytoplasm. The catalysed reaction is tRNA(Phe) + L-phenylalanine + ATP = L-phenylalanyl-tRNA(Phe) + AMP + diphosphate + H(+). This chain is Phenylalanine--tRNA ligase beta subunit, found in Thermoplasma acidophilum (strain ATCC 25905 / DSM 1728 / JCM 9062 / NBRC 15155 / AMRC-C165).